Consider the following 523-residue polypeptide: Glucose-1-phosphate adenylyltransferase large subunit 1, chloroplastic/amyloplastic (523 aa).

A chloroplast-targeting transit peptide spans 1 to 49 (MSSMQFSSVLPLEGKACVSPVRREGSACERLKIGDSSSIRHERASRRMC).

Belongs to the bacterial/plant glucose-1-phosphate adenylyltransferase family. Heterotetramer. In terms of tissue distribution, starchy endosperm and roots.

The protein localises to the plastid. It is found in the chloroplast. The protein resides in the amyloplast. It carries out the reaction alpha-D-glucose 1-phosphate + ATP + H(+) = ADP-alpha-D-glucose + diphosphate. The protein operates within glycan biosynthesis; starch biosynthesis. With respect to regulation, highly active without 3'phosphoglycerate, and is only slightly affected by the activator 3'phosphoglycerate and inhibitor orthophosphate. Its function is as follows. This protein plays a role in synthesis of starch. It catalyzes the synthesis of the activated glycosyl donor, ADP-glucose from Glc-1-P and ATP. In Hordeum vulgare (Barley), this protein is Glucose-1-phosphate adenylyltransferase large subunit 1, chloroplastic/amyloplastic.